The following is a 129-amino-acid chain: Glycine cleavage system H protein (129 aa).

In terms of domain architecture, Lipoyl-binding spans 24–106; sequence SYTVGISEHA…YGDGWFFRIM (83 aa). N6-lipoyllysine is present on Lys-65.

Belongs to the GcvH family. In terms of assembly, the glycine cleavage system is composed of four proteins: P, T, L and H. (R)-lipoate serves as cofactor.

Functionally, the glycine cleavage system catalyzes the degradation of glycine. The H protein shuttles the methylamine group of glycine from the P protein to the T protein. This Shewanella loihica (strain ATCC BAA-1088 / PV-4) protein is Glycine cleavage system H protein.